The following is a 305-amino-acid chain: Glutaminase (305 aa).

Substrate contacts are provided by serine 61, asparagine 113, glutamate 158, asparagine 165, tyrosine 189, tyrosine 241, and valine 259.

It belongs to the glutaminase family. Homotetramer.

The enzyme catalyses L-glutamine + H2O = L-glutamate + NH4(+). The sequence is that of Glutaminase from Alkaliphilus oremlandii (strain OhILAs) (Clostridium oremlandii (strain OhILAs)).